Consider the following 187-residue polypeptide: Peptidyl-tRNA hydrolase (187 aa).

A tRNA-binding site is contributed by Tyr-14. His-19 serves as the catalytic Proton acceptor. 2 residues coordinate tRNA: Tyr-64 and Asn-66.

The protein belongs to the PTH family. As to quaternary structure, monomer.

The protein resides in the cytoplasm. It carries out the reaction an N-acyl-L-alpha-aminoacyl-tRNA + H2O = an N-acyl-L-amino acid + a tRNA + H(+). Its function is as follows. Hydrolyzes ribosome-free peptidyl-tRNAs (with 1 or more amino acids incorporated), which drop off the ribosome during protein synthesis, or as a result of ribosome stalling. Catalyzes the release of premature peptidyl moieties from peptidyl-tRNA molecules trapped in stalled 50S ribosomal subunits, and thus maintains levels of free tRNAs and 50S ribosomes. This Carboxydothermus hydrogenoformans (strain ATCC BAA-161 / DSM 6008 / Z-2901) protein is Peptidyl-tRNA hydrolase.